The sequence spans 181 residues: Alkyl hydroperoxide reductase AhpD (181 aa).

Catalysis depends on Cys-131, which acts as the Proton donor. Cys-131 and Cys-134 form a disulfide bridge. The active-site Cysteine sulfenic acid (-SOH) intermediate is the Cys-134.

The protein belongs to the AhpD family.

It catalyses the reaction N(6)-[(R)-dihydrolipoyl]-L-lysyl-[lipoyl-carrier protein] + a hydroperoxide = N(6)-[(R)-lipoyl]-L-lysyl-[lipoyl-carrier protein] + an alcohol + H2O. Antioxidant protein with alkyl hydroperoxidase activity. Required for the reduction of the AhpC active site cysteine residues and for the regeneration of the AhpC enzyme activity. The polypeptide is Alkyl hydroperoxide reductase AhpD (Bradyrhizobium sp. (strain ORS 278)).